Consider the following 154-residue polypeptide: MATLEQKLTVLISDTIESMGYELVGVECQHAGRFLTVRLYIDKEGGVTIDDCSDVSRQVSAIFDVEDPISDKYNLEVSSPGLDRPLFTLAHYARFVGREMVIHLRIPMFDRRKWQGKLTKVDGDLISLEIENNGEHQFIFSNIQKANLIPVFDF.

This sequence belongs to the RimP family.

The protein resides in the cytoplasm. Its function is as follows. Required for maturation of 30S ribosomal subunits. The protein is Ribosome maturation factor RimP of Haemophilus ducreyi (strain 35000HP / ATCC 700724).